A 469-amino-acid polypeptide reads, in one-letter code: 6-phosphofructo-2-kinase/fructose-2,6-bisphosphatase 4 (469 aa).

Positions 1 to 249 (MASPRELTQN…YYLMNIHVTP (249 aa)) are 6-phosphofructo-2-kinase. ATP is bound at residue 46 to 54 (GLPARGKTY). Positions 79 and 103 each coordinate beta-D-fructose 6-phosphate. Residue Asp129 is part of the active site. Residues Thr131 and Arg137 each coordinate beta-D-fructose 6-phosphate. Cys159 is a catalytic residue. Residue 168–173 (NIVQVK) participates in ATP binding. Residues Lys173, Arg194, and Tyr198 each coordinate beta-D-fructose 6-phosphate. A fructose-2,6-bisphosphatase region spans residues 250–469 (RSIYLCRHGE…EALVTVPAHQ (220 aa)). Arg256 is a beta-D-fructose 2,6-bisphosphate binding site. His257 (tele-phosphohistidine intermediate) is an active-site residue. Asn263, Gly269, and Arg306 together coordinate beta-D-fructose 2,6-bisphosphate. The active-site Proton donor/acceptor is the Glu326. Tyr337, Arg351, Lys355, Tyr366, Gln392, and Arg396 together coordinate beta-D-fructose 2,6-bisphosphate. 348–351 (FALR) contacts ATP. ATP is bound by residues 392–396 (QAVMR) and Tyr428. Thr444 is modified (phosphothreonine; by PKC).

It in the C-terminal section; belongs to the phosphoglycerate mutase family. As to quaternary structure, homodimer.

The enzyme catalyses beta-D-fructose 2,6-bisphosphate + H2O = beta-D-fructose 6-phosphate + phosphate. The catalysed reaction is beta-D-fructose 6-phosphate + ATP = beta-D-fructose 2,6-bisphosphate + ADP + H(+). Its activity is regulated as follows. The most important regulatory mechanism of these opposing activities is by phosphorylation and dephosphorylation of the enzyme. In terms of biological role, synthesis and degradation of fructose 2,6-bisphosphate. The chain is 6-phosphofructo-2-kinase/fructose-2,6-bisphosphatase 4 (PFKFB4) from Homo sapiens (Human).